Consider the following 367-residue polypeptide: 2'-5'-oligoadenylate synthase 1A (367 aa).

The segment at 14-61 is interaction with dsRNA; it reads DKFIEDYLLPDTTFGADVKSAVNVVCDFLKERCFQGAAHPVRVSKVVK. S64 provides a ligand contact to ATP. D76, D78, and D149 together coordinate Mg(2+). The segment at 201-211 is interaction with dsRNA; sequence QRPTKLKSLIR. The ATP site is built by R211, K214, and Q231. A lipid anchor (S-geranylgeranyl cysteine) is attached at C364.

Belongs to the 2-5A synthase family. As to quaternary structure, monomer. Homotetramer. Interacts with OAS1D; the interaction inhibits OAS1A catalytic activity. Mg(2+) serves as cofactor. C-terminal prenylated. Expressed in oocytes and granulosa cells of ovary, in intestine, stomach, spleen and uterus (at protein level). Expressed at high levels in the digestive tract and lymphoid organs. Expressed in ovary and spleen.

It localises to the cytoplasm. Its subcellular location is the mitochondrion. The protein localises to the nucleus. It is found in the microsome. The protein resides in the endoplasmic reticulum. It catalyses the reaction 3 ATP = 5'-triphosphoadenylyl-(2'-&gt;5')-adenylyl-(2'-&gt;5')-adenosine + 2 diphosphate. Produced as a latent enzyme which is activated by dsRNA generated during the course of viral infection. The dsRNA activator must be at least 15 nucleotides long, and no modification of the 2'-hydroxyl group is tolerated. ssRNA or dsDNA do not act as activators. Functionally, interferon-induced, dsRNA-activated antiviral enzyme which plays a critical role in cellular innate antiviral response. In addition, it may also play a role in other cellular processes such as apoptosis, cell growth, differentiation and gene regulation. Synthesizes higher oligomers of 2'-5'-oligoadenylates (2-5A) from ATP which then bind to the inactive monomeric form of ribonuclease L (RNase L) leading to its dimerization and subsequent activation. Activation of RNase L leads to degradation of cellular as well as viral RNA, resulting in the inhibition of protein synthesis, thus terminating viral replication. Can mediate the antiviral effect via the classical RNase L-dependent pathway or an alternative antiviral pathway independent of RNase L. In Mus musculus (Mouse), this protein is 2'-5'-oligoadenylate synthase 1A (Oas1a).